Here is a 160-residue protein sequence, read N- to C-terminus: V-type proton ATPase subunit c (160 aa).

Residues 1-6 lie on the Lumenal side of the membrane; the sequence is MSDLCP. The helical transmembrane segment at 7 to 27 threads the bilayer; the sequence is VYAPFFGSIGCAAAIVFTCFG. The Cytoplasmic portion of the chain corresponds to 28–53; that stretch reads ASYGTAKSGVGICATSVTRPDLLVKN. Residues 54-74 form a helical membrane-spanning segment; sequence VVPVVMAGIIAIYGLVVSVLV. The Lumenal segment spans residues 75 to 90; sequence SDSLSQKQALYTGFIQ. A helical transmembrane segment spans residues 91 to 111; it reads LGAGLSVGLSGLAAGFAIGIV. Over 112 to 129 the chain is Cytoplasmic; that stretch reads GDAGVRGTAQQPRLFVGM. Residues 130–150 form a helical membrane-spanning segment; sequence ILILIFAEVLGLYGLIVALLL. Residues 151–160 are Lumenal-facing; it reads NSRASQDVTC.

The protein belongs to the V-ATPase proteolipid subunit family. In terms of assembly, V-ATPase is a heteromultimeric enzyme composed of a peripheral catalytic V1 complex (components A to H) attached to an integral membrane V0 proton pore complex (components: a, c, c', c'', d, e, f and VOA1). The decameric c-ring forms the proton-conducting pore, and is composed of eight proteolipid subunits c, one subunit c' and one subunit c''.

The protein resides in the vacuole membrane. Functionally, proton-conducting pore forming subunit of the V0 complex of vacuolar(H+)-ATPase (V-ATPase), a multisubunit enzyme composed of a peripheral complex (V1) that hydrolyzes ATP and a membrane integral complex (V0) that translocates protons. V-ATPase is responsible for acidifying and maintaining the pH of intracellular compartments. This chain is V-type proton ATPase subunit c (VMA3), found in Candida tropicalis (Yeast).